A 360-amino-acid polypeptide reads, in one-letter code: Magnesium-protoporphyrin IX monomethyl ester [oxidative] cyclase (360 aa).

The tract at residues 1-21 is disordered; that stretch reads MPPTAVTEATAVPGSNVTTKD.

Belongs to the AcsF family. Fe cation serves as cofactor.

It catalyses the reaction Mg-protoporphyrin IX 13-monomethyl ester + 3 NADPH + 3 O2 + 2 H(+) = 3,8-divinyl protochlorophyllide a + 3 NADP(+) + 5 H2O. It participates in porphyrin-containing compound metabolism; chlorophyll biosynthesis (light-independent). Its function is as follows. Catalyzes the formation of the isocyclic ring in chlorophyll biosynthesis. Mediates the cyclase reaction, which results in the formation of divinylprotochlorophyllide (Pchlide) characteristic of all chlorophylls from magnesium-protoporphyrin IX 13-monomethyl ester (MgPMME). This chain is Magnesium-protoporphyrin IX monomethyl ester [oxidative] cyclase, found in Synechococcus sp. (strain CC9311).